A 55-amino-acid chain; its full sequence is Small ribosomal subunit protein uS14 (55 aa).

The interval 1–20 is disordered; that stretch reads MSFEPSGPHSHRKPFGKGSR. 4 residues coordinate Zn(2+): C22, C25, C38, and C41.

The protein belongs to the universal ribosomal protein uS14 family. Zn(2+) serves as cofactor.

The protein is Small ribosomal subunit protein uS14 (RPS29) of Encephalitozoon cuniculi (strain GB-M1) (Microsporidian parasite).